We begin with the raw amino-acid sequence, 164 residues long: Lipoprotein signal peptidase (164 aa).

3 consecutive transmembrane segments (helical) span residues 12–32, 70–90, and 102–122; these read WLWLVVVVLIIDLGSKYLILQ, WFFAGIAIGISVILAVMMYRS, and ALIIGGALGNLFDRLWHGFVV. Active-site residues include D123 and D141. Residues 137–157 traverse the membrane as a helical segment; it reads FNLADTAICVGAALIVLEGFL.

This sequence belongs to the peptidase A8 family.

The protein localises to the cell inner membrane. It catalyses the reaction Release of signal peptides from bacterial membrane prolipoproteins. Hydrolyzes -Xaa-Yaa-Zaa-|-(S,diacylglyceryl)Cys-, in which Xaa is hydrophobic (preferably Leu), and Yaa (Ala or Ser) and Zaa (Gly or Ala) have small, neutral side chains.. It participates in protein modification; lipoprotein biosynthesis (signal peptide cleavage). In terms of biological role, this protein specifically catalyzes the removal of signal peptides from prolipoproteins. The chain is Lipoprotein signal peptidase from Shigella sonnei (strain Ss046).